The chain runs to 225 residues: Glutathione S-transferase Mu 3 (225 aa).

A GST N-terminal domain is found at 5–92 (SSMVLGYWDI…YIARKHNMCG (88 aa)). Residues 11–12 (YW), 50–54 (WLDVK), and 63–64 (NL) each bind glutathione. Lys-54 is covalently cross-linked (Glycyl lysine isopeptide (Lys-Gly) (interchain with G-Cter in SUMO2)). Lys-73 is covalently cross-linked (Glycyl lysine isopeptide (Lys-Gly) (interchain with G-Cter in SUMO2)). Residue 76-77 (QS) coordinates glutathione. Positions 94-212 (TEEEKIRVDI…QSDQFCKMPI (119 aa)) constitute a GST C-terminal domain. Tyr-120 contacts substrate.

This sequence belongs to the GST superfamily. Mu family. Homodimer. The N-terminus is blocked. As to expression, testis and brain.

The protein localises to the cytoplasm. It catalyses the reaction RX + glutathione = an S-substituted glutathione + a halide anion + H(+). Functionally, conjugation of reduced glutathione to a wide number of exogenous and endogenous hydrophobic electrophiles. May govern uptake and detoxification of both endogenous compounds and xenobiotics at the testis and brain blood barriers. This chain is Glutathione S-transferase Mu 3 (GSTM3), found in Homo sapiens (Human).